Here is a 143-residue protein sequence, read N- to C-terminus: Large ribosomal subunit protein uL11 (143 aa).

Belongs to the universal ribosomal protein uL11 family. Part of the ribosomal stalk of the 50S ribosomal subunit. Interacts with L10 and the large rRNA to form the base of the stalk. L10 forms an elongated spine to which L12 dimers bind in a sequential fashion forming a multimeric L10(L12)X complex. Post-translationally, one or more lysine residues are methylated.

Forms part of the ribosomal stalk which helps the ribosome interact with GTP-bound translation factors. In Acidovorax ebreus (strain TPSY) (Diaphorobacter sp. (strain TPSY)), this protein is Large ribosomal subunit protein uL11.